A 610-amino-acid polypeptide reads, in one-letter code: Nuclear factor 7, ovary (610 aa).

The 55-residue stretch at 21–75 (NVGSTYPCKRSDGSQHDADIVKTRYNKQAGREEYYVHYVGLNRRQNEWVDKSRLV) folds into the Tudor-knot domain. The interval 79-127 (PPKEVETNGTDQEEMTEPTEQPDSKTPQKRKLEEPEPEPKKAKVEDKDA) is disordered. Thr-104 carries the phosphothreonine; by CDK1 modification. A compositionally biased stretch (basic and acidic residues) spans 108 to 127 (RKLEEPEPEPKKAKVEDKDA). The segment at 146–186 (CPLCVELFKDPVMVACGHNFCRSCIDKVWEGQSSFACPECK) adopts an RING-type zinc-finger fold. The segment at 220-261 (RPLEKCSEHDERLKLYCKDDGTLGCVICRDSLKHASHNFLPI) adopts a B box-type zinc-finger fold. Zn(2+) is bound by residues Cys-225, His-228, Cys-247, and His-253. A coiled-coil region spans residues 295 to 374 (DKIEQHNKNV…AKERMEETDS (80 aa)). Residues 415-610 (PIQYIMWKEL…VDALRFVHNQ (196 aa)) form the B30.2/SPRY domain.

In terms of assembly, monomer. Abundant in oocytes. At the neurula stage, low expression in dorsal embryo region including neural folds and somites.

It is found in the nucleus. Its function is as follows. Transcription factor that determines dorsal-ventral body axis. In Xenopus laevis (African clawed frog), this protein is Nuclear factor 7, ovary.